Consider the following 423-residue polypeptide: Serine hydroxymethyltransferase (423 aa).

Residue 121-123 (GHI) coordinates (6S)-5,6,7,8-tetrahydrofolate. At Lys227 the chain carries N6-(pyridoxal phosphate)lysine. Glu242 is a (6S)-5,6,7,8-tetrahydrofolate binding site.

This sequence belongs to the SHMT family. Homodimer. Requires pyridoxal 5'-phosphate as cofactor.

It localises to the cytoplasm. The enzyme catalyses 5,10-methylenetetrahydromethanopterin + glycine + H2O = 5,6,7,8-tetrahydromethanopterin + L-serine. It participates in amino-acid biosynthesis; glycine biosynthesis; glycine from L-serine: step 1/1. Its function is as follows. Catalyzes the reversible interconversion of serine and glycine with tetrahydromethanopterin (H4MPT) serving as the one-carbon carrier. Cannot use tetrahydrofolate (THF or H4PteGlu) instead of H4MPT as the pteridine substrate. Also probably exhibits a pteridine-independent aldolase activity toward beta-hydroxyamino acids, producing glycine and aldehydes, via a retro-aldol mechanism. The protein is Serine hydroxymethyltransferase of Methanothermobacter thermautotrophicus (strain ATCC 29096 / DSM 1053 / JCM 10044 / NBRC 100330 / Delta H) (Methanobacterium thermoautotrophicum).